The sequence spans 299 residues: Small ribosomal subunit biogenesis GTPase RsgA (299 aa).

A CP-type G domain is found at 73–232 (CSWLTRPQVA…VADTPGFNRP (160 aa)). GTP contacts are provided by residues 122–125 (TKGD) and 174–182 (GPSGVGKSS). Zn(2+)-binding residues include C257, C262, H264, and C270.

This sequence belongs to the TRAFAC class YlqF/YawG GTPase family. RsgA subfamily. As to quaternary structure, monomer. Associates with 30S ribosomal subunit, binds 16S rRNA. Requires Zn(2+) as cofactor.

The protein resides in the cytoplasm. One of several proteins that assist in the late maturation steps of the functional core of the 30S ribosomal subunit. Helps release RbfA from mature subunits. May play a role in the assembly of ribosomal proteins into the subunit. Circularly permuted GTPase that catalyzes slow GTP hydrolysis, GTPase activity is stimulated by the 30S ribosomal subunit. The polypeptide is Small ribosomal subunit biogenesis GTPase RsgA (Parasynechococcus marenigrum (strain WH8102)).